The following is a 1549-amino-acid chain: ATP-binding cassette sub-family C member 9 (1549 aa).

Over 1 to 30 the chain is Extracellular; the sequence is MSLSFCGNNISSYNINDGVLQNSCFVDALN. An N-linked (GlcNAc...) asparagine glycan is attached at asparagine 9. The helical transmembrane segment at 31-51 threads the bilayer; that stretch reads LVPHVFLLFITFPILFIGWGS. At 52–72 the chain is on the cytoplasmic side; it reads QSSKVQIHHNTWLHFPGHNLR. A helical membrane pass occupies residues 73–93; it reads WILTFALLFVHVCEIAEGIVS. The Extracellular segment spans residues 94–101; it reads DSRRESRH. Residues 102–122 traverse the membrane as a helical segment; it reads LHLFMPAVMGFVATTTSIVYY. At 123 to 132 the chain is on the cytoplasmic side; the sequence is HNIETSNFPK. A helical membrane pass occupies residues 133–153; it reads LLLALFLYWVMAFITKTIKLV. The Extracellular portion of the chain corresponds to 154–167; sequence KYCQSGLDISNLRF. The helical transmembrane segment at 168–188 threads the bilayer; it reads CITGMMVILNGLLMAVEINVI. The Cytoplasmic segment spans residues 189–301; that stretch reads RVRRYVFFMN…AFGRPILLSS (113 aa). Residues 297-597 enclose the ABC transmembrane type-1 1 domain; it reads ILLSSTFRYL…LSTVVRFAVK (301 aa). A helical membrane pass occupies residues 302–322; sequence TFRYLADLLGFAGPLCISGIV. The Extracellular segment spans residues 323–350; that stretch reads QRVNETQNGTNNTTGISETLSSKEFLEN. N-linked (GlcNAc...) asparagine glycans are attached at residues asparagine 326, asparagine 330, asparagine 333, and asparagine 334. A helical transmembrane segment spans residues 351–371; sequence AYVLAVLLFLALILQRTFLQA. Over 372–423 the chain is Cytoplasmic; it reads SYYVTIETGINLRGALLAMIYNKILRLSTSNLSMGEMTLGQINNLVAIETNQ. Residues 424–444 traverse the membrane as a helical segment; sequence LMWFLFLCPNLWAMPVQIIMG. The Extracellular segment spans residues 445–455; that stretch reads VILLYNLLGSS. Residues 456 to 476 form a helical membrane-spanning segment; that stretch reads ALVGAAVIVLLAPIQYFIATK. Residues 477–531 are Cytoplasmic-facing; sequence LAEAQKSTLDYSTERLKKTNEILKGIKLLKLYAWEHIFCKSVEETRMKELSSLKT. A helical transmembrane segment spans residues 532–552; sequence FALYTSLSIFMNAAIPIAAVL. Topologically, residues 553-571 are extracellular; it reads ATFVTHAYASGNNLKPAEA. A helical membrane pass occupies residues 572 to 592; sequence FASLSLFHILVTPLFLLSTVV. At 593 to 990 the chain is on the cytoplasmic side; that stretch reads RFAVKAIISV…TCWRYLTSGG (398 aa). The region spanning 672–912 is the ABC transporter 1 domain; it reads IKVTNGYFSW…DVELYEHWKT (241 aa). Residue 705–712 coordinates ATP; it reads GQVGCGKS. Positions 944-967 are disordered; that stretch reads REAKAQMEDEDEEEEEEEDEDDNM. A compositionally biased stretch (acidic residues) spans 951–966; sequence EDEDEEEEEEEDEDDN. A helical membrane pass occupies residues 991 to 1011; sequence FFLLILMIFSKLLKHSVIVAI. In terms of domain architecture, ABC transmembrane type-1 2 spans 994–1274; the sequence is LILMIFSKLL…VVRNLADLEV (281 aa). The Extracellular portion of the chain corresponds to 1012–1034; sequence DYWLATWTSEYSINNTGKADQTY. The chain crosses the membrane as a helical span at residues 1035 to 1055; that stretch reads YVAGFSILCGAGIFLCLVTSL. The Cytoplasmic portion of the chain corresponds to 1056-1127; it reads TVEWMGLTAA…TLLCLSAIGM (72 aa). Residues 1128–1148 traverse the membrane as a helical segment; that stretch reads ISYATPVFLVALLPLGVAFYF. The Extracellular portion of the chain corresponds to 1149–1245; the sequence is IQKYFRVASK…IASISGSSNS (97 aa). The helical transmembrane segment at 1246–1266 threads the bilayer; the sequence is GLVGLGLLYALTITNYLNWVV. At 1267–1549 the chain is on the cytoplasmic side; that stretch reads RNLADLEVQM…LFSTLVMTNK (283 aa). Residues 1312–1546 form the ABC transporter 2 domain; sequence IKIHDLCVRY…KNGLFSTLVM (235 aa). An ATP-binding site is contributed by 1346–1353; it reads GRTGSGKS.

It belongs to the ABC transporter superfamily. ABCC family. Conjugate transporter (TC 3.A.1.208) subfamily. Interacts with KCNJ11. Interacts with KCNJ8.

The protein resides in the membrane. Subunit of ATP-sensitive potassium channels (KATP). Can form cardiac and smooth muscle-type KATP channels with KCNJ11. KCNJ11 forms the channel pore while ABCC9 is required for activation and regulation. Can form a sulfonylurea-sensitive but ATP-insensitive potassium channel with KCNJ8. This chain is ATP-binding cassette sub-family C member 9 (ABCC9), found in Homo sapiens (Human).